Here is a 173-residue protein sequence, read N- to C-terminus: Disulfide bond formation protein B (173 aa).

Topologically, residues 1–14 (MIEFLRRIAAHRLA) are cytoplasmic. Residues 15 to 31 (WSLLAASALFLELSALF) traverse the membrane as a helical segment. At 32–49 (FQHVLGLHPCVMCVYERI) the chain is on the periplasmic side. The cysteines at positions 41 and 44 are disulfide-linked. A helical transmembrane segment spans residues 50–65 (ATLGVLTAGLLGMVAP). At 66–72 (QKWYVRW) the chain is on the cytoplasmic side. The chain crosses the membrane as a helical span at residues 73–90 (SALLLWGSSAFWGLKLAL). Topologically, residues 91-145 (KHVDYQVNPSPFNVCEGFVDFPSWAPLDQWIPWMFYPDGDCSEVTWQFLSFSMPQ) are periplasmic. An intrachain disulfide couples cysteine 105 to cysteine 131. Residues 146–164 (WLVAIFAVYLLVFVVVAIG) traverse the membrane as a helical segment. At 165-173 (NLVKGRCCS) the chain is on the cytoplasmic side.

This sequence belongs to the DsbB family.

It localises to the cell inner membrane. Its function is as follows. Required for disulfide bond formation in some periplasmic proteins. Acts by oxidizing the DsbA protein. The sequence is that of Disulfide bond formation protein B from Aeromonas hydrophila subsp. hydrophila (strain ATCC 7966 / DSM 30187 / BCRC 13018 / CCUG 14551 / JCM 1027 / KCTC 2358 / NCIMB 9240 / NCTC 8049).